The sequence spans 502 residues: Lysine--tRNA ligase (502 aa).

Positions 409 and 416 each coordinate Mg(2+).

The protein belongs to the class-II aminoacyl-tRNA synthetase family. As to quaternary structure, homodimer. Requires Mg(2+) as cofactor.

Its subcellular location is the cytoplasm. The catalysed reaction is tRNA(Lys) + L-lysine + ATP = L-lysyl-tRNA(Lys) + AMP + diphosphate. This chain is Lysine--tRNA ligase, found in Prochlorococcus marinus (strain SARG / CCMP1375 / SS120).